The following is a 661-amino-acid chain: Acetyl-coenzyme A synthetase (661 aa).

CoA-binding positions include 197 to 200 and threonine 320; that span reads RGGK. ATP is bound by residues 396–398, 420–425, aspartate 511, and arginine 526; these read GEP and DTWWQT. Serine 534 serves as a coordination point for CoA. Arginine 537 is an ATP binding site. Residues valine 548 and valine 553 each contribute to the Mg(2+) site. An N6-acetyllysine modification is found at lysine 620.

Belongs to the ATP-dependent AMP-binding enzyme family. Mg(2+) serves as cofactor. Post-translationally, acetylated. Deacetylation by the SIR2-homolog deacetylase activates the enzyme.

The enzyme catalyses acetate + ATP + CoA = acetyl-CoA + AMP + diphosphate. Its function is as follows. Catalyzes the conversion of acetate into acetyl-CoA (AcCoA), an essential intermediate at the junction of anabolic and catabolic pathways. AcsA undergoes a two-step reaction. In the first half reaction, AcsA combines acetate with ATP to form acetyl-adenylate (AcAMP) intermediate. In the second half reaction, it can then transfer the acetyl group from AcAMP to the sulfhydryl group of CoA, forming the product AcCoA. This is Acetyl-coenzyme A synthetase from Leptospira interrogans serogroup Icterohaemorrhagiae serovar copenhageni (strain Fiocruz L1-130).